The sequence spans 166 residues: MTDFLEIRPLTKEAFTPFGDVIETTPSSMRHINGGQTERHHALSAPEAAGEGARIILNIFRGQPRVFPHKIDMMERHPLGSQSFSPLSGRPFLVVVAQDDGGRPARPQVFLARGDQGVNYRRNVWHYPLMPLQAVSDFLVADREGPGNNLEEYFFDEPFMIAEPSL.

Belongs to the ureidoglycolate lyase family. As to quaternary structure, homodimer. Ni(2+) serves as cofactor.

The catalysed reaction is (S)-ureidoglycolate = urea + glyoxylate. Its pathway is nitrogen metabolism; (S)-allantoin degradation. Functionally, catalyzes the catabolism of the allantoin degradation intermediate (S)-ureidoglycolate, generating urea and glyoxylate. Involved in the utilization of allantoin as nitrogen source. The sequence is that of Ureidoglycolate lyase from Agrobacterium fabrum (strain C58 / ATCC 33970) (Agrobacterium tumefaciens (strain C58)).